A 388-amino-acid chain; its full sequence is Flavin-dependent monooxygenase (388 aa).

Residues 26-27 and 45-48 each bind FAD; these read PV and YERD. R54 serves as a coordination point for NADPH. Residues D61, R117, and L139 each contribute to the FAD site. Residues Q192 and R213 each contribute to the substrate site. FAD is bound by residues D311 and 321-324; that span reads GQGV.

Belongs to the aromatic-ring hydroxylase family. TetX subfamily. Monomer. Requires FAD as cofactor.

The protein localises to the cytoplasm. It catalyses the reaction a tetracycline + NADPH + O2 + H(+) = an 11a-hydroxytetracycline + NADP(+) + H2O. The catalysed reaction is tetracycline + NADPH + O2 + H(+) = 11a-hydroxytetracycline + NADP(+) + H2O. The enzyme catalyses tigecycline + NADPH + O2 + H(+) = 11a-hydroxytigecycline + NADP(+) + H2O. It carries out the reaction oxytetracycline + NADPH + O2 + H(+) = 11a-hydroxy-oxytetracycline + NADP(+) + H2O. With respect to regulation, anhydrotetracycline, a poor substrate, prevents tetracycline degradation in vitro. In terms of biological role, an FAD-requiring monooxygenase active on tetracycline antibiotic derivatives, which leads to their inactivation. Hydroxylates carbon 11a of oxytetracycline and tigecycline. Acts on many tetracycline analogs (chlorotetracycline, demeclocycline, doxycycline, minocycline, oxytetracyclinee), probably by monooxygenization. Tigecycline, a new generation tetracycline antibiotic, is rendered less effective against E.coli by this monooxygenation, is much weaker at inhibiting translation in vitro and binds Mg(2+) considerably less well. Expression in E.coli BW25113 reduces its growth rate about 5%. The reaction probably proceeds by FAD reduction by NADPH and, second, hydroxylation of antibiotic in a ping-pong mechanism. Degrades chlortetracycline, probably by monooxygenation. Slowly oxidizes anhydrotetracycline, the final substrate in tetracycline biosynthesis. The chain is Flavin-dependent monooxygenase from Bacteroides thetaiotaomicron.